Reading from the N-terminus, the 480-residue chain is Wax ester synthase/diacylglycerol acyltransferase 7 (480 aa).

The Cytoplasmic segment spans residues 1–193 (MTYGEEEPVS…LRSIFTIGST (193 aa)). His-135 (proton acceptor) is an active-site residue. Residues 194–214 (MRLLWNTTIDMLLLLATVLFL) traverse the membrane as a helical segment. Residues 215–329 (KDTKTPLKAG…VKDSKCRWGN (115 aa)) are Lumenal-facing. A glycan (N-linked (GlcNAc...) asparagine) is linked at Asn-252. A helical transmembrane segment spans residues 330-350 (YFSFIFLPFTIGLQTDPLVYL). The Cytoplasmic segment spans residues 351 to 365 (KMSKSMMARKKHSYH). A helical transmembrane segment spans residues 366–386 (AALVYFIIKIVLKVFGAKAAA). At 387-480 (ELFDRPVRNT…KASLCERGLL (94 aa)) the chain is on the lumenal side. A glycan (N-linked (GlcNAc...) asparagine) is linked at Asn-395.

This sequence in the N-terminal section; belongs to the long-chain O-acyltransferase family. In terms of tissue distribution, expressed in roots, stems, leaves, flowers and siliques.

Its subcellular location is the cell membrane. It localises to the endoplasmic reticulum membrane. The protein resides in the golgi apparatus membrane. The enzyme catalyses an acyl-CoA + a 1,2-diacyl-sn-glycerol = a triacyl-sn-glycerol + CoA. It catalyses the reaction a long chain fatty alcohol + a fatty acyl-CoA = a wax ester + CoA. Its pathway is glycerolipid metabolism; triacylglycerol biosynthesis. The protein operates within lipid metabolism. Bifunctional wax ester synthase/diacylglycerol acyltransferase that uses acyl-CoAs with 14, 16 and 18 carbons as substrates, preferably in combination with 16:0ol alcohol. Involved in cuticular wax biosynthesis. The sequence is that of Wax ester synthase/diacylglycerol acyltransferase 7 from Arabidopsis thaliana (Mouse-ear cress).